Consider the following 1427-residue polypeptide: DNA-directed RNA polymerase subunit beta' (1427 aa).

Zn(2+) contacts are provided by Cys-66, Cys-68, Cys-81, and Cys-84. Mg(2+)-binding residues include Asp-472, Asp-474, and Asp-476. Cys-815, Cys-889, Cys-896, and Cys-899 together coordinate Zn(2+).

Belongs to the RNA polymerase beta' chain family. The RNAP catalytic core consists of 2 alpha, 1 beta, 1 beta' and 1 omega subunit. When a sigma factor is associated with the core the holoenzyme is formed, which can initiate transcription. Mg(2+) is required as a cofactor. The cofactor is Zn(2+).

It catalyses the reaction RNA(n) + a ribonucleoside 5'-triphosphate = RNA(n+1) + diphosphate. DNA-dependent RNA polymerase catalyzes the transcription of DNA into RNA using the four ribonucleoside triphosphates as substrates. The sequence is that of DNA-directed RNA polymerase subunit beta' from Bacteroides fragilis (strain ATCC 25285 / DSM 2151 / CCUG 4856 / JCM 11019 / LMG 10263 / NCTC 9343 / Onslow / VPI 2553 / EN-2).